A 258-amino-acid polypeptide reads, in one-letter code: Imidazole glycerol phosphate synthase subunit HisF (258 aa).

Active-site residues include aspartate 12 and aspartate 131.

This sequence belongs to the HisA/HisF family. Heterodimer of HisH and HisF.

The protein resides in the cytoplasm. The enzyme catalyses 5-[(5-phospho-1-deoxy-D-ribulos-1-ylimino)methylamino]-1-(5-phospho-beta-D-ribosyl)imidazole-4-carboxamide + L-glutamine = D-erythro-1-(imidazol-4-yl)glycerol 3-phosphate + 5-amino-1-(5-phospho-beta-D-ribosyl)imidazole-4-carboxamide + L-glutamate + H(+). The protein operates within amino-acid biosynthesis; L-histidine biosynthesis; L-histidine from 5-phospho-alpha-D-ribose 1-diphosphate: step 5/9. IGPS catalyzes the conversion of PRFAR and glutamine to IGP, AICAR and glutamate. The HisF subunit catalyzes the cyclization activity that produces IGP and AICAR from PRFAR using the ammonia provided by the HisH subunit. This is Imidazole glycerol phosphate synthase subunit HisF from Paenarthrobacter aurescens (strain TC1).